The chain runs to 509 residues: Maturase K (509 aa).

Belongs to the intron maturase 2 family. MatK subfamily.

The protein localises to the plastid. It is found in the chloroplast. Functionally, usually encoded in the trnK tRNA gene intron. Probably assists in splicing its own and other chloroplast group II introns. In Anthocercis viscosa (Sticky tailflower), this protein is Maturase K.